We begin with the raw amino-acid sequence, 456 residues long: Bifunctional protein GlmU (456 aa).

Positions 1–229 (MLNNAMSVVI…LSEVEGVNNR (229 aa)) are pyrophosphorylase. UDP-N-acetyl-alpha-D-glucosamine-binding positions include 11 to 14 (LAAG), lysine 25, glutamine 76, 81 to 82 (GT), 103 to 105 (YGD), glycine 140, glutamate 154, asparagine 169, and asparagine 227. Aspartate 105 provides a ligand contact to Mg(2+). Mg(2+) is bound at residue asparagine 227. A linker region spans residues 230–250 (LQLSRLERVYQSEQAEKLLLA). The interval 251–456 (GVMLRDPARF…EGWRRPVKKK (206 aa)) is N-acetyltransferase. Residues arginine 333 and lysine 351 each coordinate UDP-N-acetyl-alpha-D-glucosamine. Histidine 363 (proton acceptor) is an active-site residue. UDP-N-acetyl-alpha-D-glucosamine-binding residues include tyrosine 366 and asparagine 377. Acetyl-CoA-binding positions include alanine 380, 386 to 387 (NY), serine 405, alanine 423, and arginine 440.

In the N-terminal section; belongs to the N-acetylglucosamine-1-phosphate uridyltransferase family. This sequence in the C-terminal section; belongs to the transferase hexapeptide repeat family. As to quaternary structure, homotrimer. The cofactor is Mg(2+).

It is found in the cytoplasm. The enzyme catalyses alpha-D-glucosamine 1-phosphate + acetyl-CoA = N-acetyl-alpha-D-glucosamine 1-phosphate + CoA + H(+). The catalysed reaction is N-acetyl-alpha-D-glucosamine 1-phosphate + UTP + H(+) = UDP-N-acetyl-alpha-D-glucosamine + diphosphate. Its pathway is nucleotide-sugar biosynthesis; UDP-N-acetyl-alpha-D-glucosamine biosynthesis; N-acetyl-alpha-D-glucosamine 1-phosphate from alpha-D-glucosamine 6-phosphate (route II): step 2/2. It participates in nucleotide-sugar biosynthesis; UDP-N-acetyl-alpha-D-glucosamine biosynthesis; UDP-N-acetyl-alpha-D-glucosamine from N-acetyl-alpha-D-glucosamine 1-phosphate: step 1/1. The protein operates within bacterial outer membrane biogenesis; LPS lipid A biosynthesis. Its function is as follows. Catalyzes the last two sequential reactions in the de novo biosynthetic pathway for UDP-N-acetylglucosamine (UDP-GlcNAc). The C-terminal domain catalyzes the transfer of acetyl group from acetyl coenzyme A to glucosamine-1-phosphate (GlcN-1-P) to produce N-acetylglucosamine-1-phosphate (GlcNAc-1-P), which is converted into UDP-GlcNAc by the transfer of uridine 5-monophosphate (from uridine 5-triphosphate), a reaction catalyzed by the N-terminal domain. This Escherichia coli (strain 55989 / EAEC) protein is Bifunctional protein GlmU.